A 317-amino-acid polypeptide reads, in one-letter code: MFVRNALVVTGLLAALTQAAPAERNTSRHKLTVYWGAEDDTTTLDDVCNDSSYDVVNLAFLSHFFSGGGYPRMSIGNLDGPSRAQKKAGATGLQDGSSLVKSIKNCQSKGKPVILSMGGATDYSDVQLHSDAQGQQIANTVWDLFLGGTDHKELRPFGDVKLDGVDLDNETNDGTGYLAMAKQFKANFQKDTSKKYYITAAPQCPYPDQSEPLDVCRLLDWVQVQFYNNGNCNIAQSGFATAVKNWSRGIGSGVQLYIGALASGADGDEGYVDAAVLNRAIDQVKAMDLPNFGGAMLWEAQLAVNNGNYQKEIKANL.

Positions Met-1–Ala-19 are cleaved as a signal peptide. Asn-25, Asn-49, and Asn-169 each carry an N-linked (GlcNAc...) asparagine glycan. Residues His-29–Leu-317 form the GH18 domain. Glu-170 (proton donor) is an active-site residue. Residue Asn-245 is glycosylated (N-linked (GlcNAc...) asparagine).

This sequence belongs to the glycosyl hydrolase 18 family. Chitinase class III subfamily.

It localises to the secreted. The catalysed reaction is Random endo-hydrolysis of N-acetyl-beta-D-glucosaminide (1-&gt;4)-beta-linkages in chitin and chitodextrins.. Functionally, secreted chitinase involved in the degradation of chitin, a component of the cell walls of fungi and exoskeletal elements of some animals (including worms and arthropods). Participates in the infection process and directly acts in the penetration process of the host cuticle. Involved in heat-shock adaptation. The protein is Endochitinase 3 (chi3) of Metarhizium robertsii (strain ARSEF 23 / ATCC MYA-3075) (Metarhizium anisopliae (strain ARSEF 23)).